Here is a 658-residue protein sequence, read N- to C-terminus: Exoribonuclease 2 (658 aa).

Residues 189 to 531 enclose the RNB domain; that stretch reads REDLTALHFI…NHRLIKAVLT (343 aa). One can recognise an S1 motif domain in the interval 576 to 658; that stretch reads KPTFQAEIQD…ETRSIVGTLC (83 aa).

This sequence belongs to the RNR ribonuclease family. RNase II subfamily.

Its subcellular location is the cytoplasm. It catalyses the reaction Exonucleolytic cleavage in the 3'- to 5'-direction to yield nucleoside 5'-phosphates.. Its function is as follows. Involved in mRNA degradation. Hydrolyzes single-stranded polyribonucleotides processively in the 3' to 5' direction. The polypeptide is Exoribonuclease 2 (Pasteurella multocida (strain Pm70)).